A 419-amino-acid chain; its full sequence is Carboxypeptidase A1 (419 aa).

A signal peptide spans 1–16 (MRGLLVLSVLLGAVFG). Residues 17–110 (KEDFVGHQVL…QEQMFAFRSR (94 aa)) constitute a propeptide, activation peptide. Positions 121-414 (TYHTLEEIYD…LALLTIMEHT (294 aa)) constitute a Peptidase M14 domain. 2 residues coordinate Zn(2+): His-179 and Glu-182. Residues 179-182 (HSRE), Arg-237, and 254-255 (NR) each bind substrate. Cysteines 248 and 271 form a disulfide. A Zn(2+)-binding site is contributed by His-306. Substrate is bound by residues 307–308 (SY) and Tyr-358. The active-site Proton donor/acceptor is the Glu-380.

It belongs to the peptidase M14 family. As to quaternary structure, monomer. May form a complex with proelastase 2. It depends on Zn(2+) as a cofactor.

The protein resides in the secreted. It carries out the reaction Release of a C-terminal amino acid, but little or no action with -Asp, -Glu, -Arg, -Lys or -Pro.. It catalyses the reaction leukotriene C4 + H2O = leukotriene F4 + glycine. Inhibited by interaction with the S.magnifica carboxypeptidase inhibitor SmCI. In terms of biological role, carboxypeptidase that catalyzes the release of a C-terminal amino acid, but has little or no action with -Asp, -Glu, -Arg, -Lys or -Pro. Catalyzes the conversion of leukotriene C4 to leukotriene F4 via the hydrolysis of an amide bond. The protein is Carboxypeptidase A1 of Homo sapiens (Human).